A 440-amino-acid chain; its full sequence is Xylose isomerase (440 aa).

Catalysis depends on residues H100 and D103. E231, E267, H270, D295, D306, D308, and D338 together coordinate Mg(2+).

Belongs to the xylose isomerase family. Homotetramer. Mg(2+) is required as a cofactor.

The protein resides in the cytoplasm. The enzyme catalyses alpha-D-xylose = alpha-D-xylulofuranose. In Paraburkholderia xenovorans (strain LB400), this protein is Xylose isomerase.